Here is a 131-residue protein sequence, read N- to C-terminus: D-ribose pyranase (131 aa).

His20 serves as the catalytic Proton donor. Substrate-binding positions include Asp28, His98, and 120 to 122 (YSN).

The protein belongs to the RbsD / FucU family. RbsD subfamily. In terms of assembly, homodecamer.

It is found in the cytoplasm. It catalyses the reaction beta-D-ribopyranose = beta-D-ribofuranose. It participates in carbohydrate metabolism; D-ribose degradation; D-ribose 5-phosphate from beta-D-ribopyranose: step 1/2. Its function is as follows. Catalyzes the interconversion of beta-pyran and beta-furan forms of D-ribose. The protein is D-ribose pyranase of Lactobacillus johnsonii (strain CNCM I-12250 / La1 / NCC 533).